Here is a 163-residue protein sequence, read N- to C-terminus: Phosphopantetheine adenylyltransferase (163 aa).

Residue T9 participates in substrate binding. ATP contacts are provided by residues T9–F10 and H17. Residues K41, L76, and R90 each coordinate substrate. ATP-binding positions include G91–R93, E101, and H126–R132.

The protein belongs to the bacterial CoaD family. Homohexamer. The cofactor is Mg(2+).

The protein localises to the cytoplasm. The catalysed reaction is (R)-4'-phosphopantetheine + ATP + H(+) = 3'-dephospho-CoA + diphosphate. It functions in the pathway cofactor biosynthesis; coenzyme A biosynthesis; CoA from (R)-pantothenate: step 4/5. Its function is as follows. Reversibly transfers an adenylyl group from ATP to 4'-phosphopantetheine, yielding dephospho-CoA (dPCoA) and pyrophosphate. This Caulobacter vibrioides (strain ATCC 19089 / CIP 103742 / CB 15) (Caulobacter crescentus) protein is Phosphopantetheine adenylyltransferase.